A 1009-amino-acid chain; its full sequence is Epididymis-specific alpha-mannosidase (1009 aa).

The N-terminal stretch at 1–23 is a signal peptide; it reads MGQLCWLPLLAPLLLLRPPGVQS. Residues His36, Asp38, and Asp151 each coordinate Zn(2+). The Nucleophile role is filled by Asp151. Residues Asn226, Asn249, Asn294, and Asn336 are each glycosylated (N-linked (GlcNAc...) asparagine). Position 420 (His420) interacts with Zn(2+). N-linked (GlcNAc...) asparagine glycans are attached at residues Asn516, Asn608, Asn670, Asn675, Asn748, Asn808, Asn812, and Asn890. A disordered region spans residues 972 to 991; sequence GPGRHRGDTTSPSRPPGGPI.

The protein belongs to the glycosyl hydrolase 38 family. It depends on Zn(2+) as a cofactor.

Its subcellular location is the secreted. The catalysed reaction is Hydrolysis of terminal, non-reducing alpha-D-mannose residues in alpha-D-mannosides.. The polypeptide is Epididymis-specific alpha-mannosidase (MAN2B2) (Homo sapiens (Human)).